Here is a 325-residue protein sequence, read N- to C-terminus: 6-hydroxymellein 5-farnesyltransferase cdmH (325 aa).

Helical transmembrane passes span 60–80 (ASIL…GAAG), 113–133 (AFTW…AMLG), 138–158 (WPFM…KRPI), 169–189 (LLGI…YGPC), and 192–212 (ISEI…WSFY). Asn-214 carries an N-linked (GlcNAc...) asparagine glycan. Transmembrane regions (helical) follow at residues 243–263 (ALLA…LRPF), 267–287 (WLWL…LLSF), and 295–315 (GGVL…ACTL).

This sequence belongs to the UbiA prenyltransferase family. The cofactor is Mg(2+).

The protein resides in the membrane. It carries out the reaction 6-hydroxymellein + (2E,6E)-farnesyl diphosphate = verruculide C + diphosphate. It functions in the pathway secondary metabolite biosynthesis; terpenoid biosynthesis. In terms of biological role, 6-hydroxymellein 5-farnesyltransferase; part of the gene cluster that mediates the biosynthesis of chrodrimanin B, a meroterpenoid that acts as a potent blocker of insect GABA-gated chloride channels. The first step of the pathway is the biosynthesis of 6-hydroxymellein by the polyketide synthase cdmE. The prenyltransferase cdmH acts as a 6-hydroxymellein 5-farnesyltransferase and produces the hydrophobic metabolite verruculide C. The FAD-dependent monooxygenase cdmI further converts verruculide C into verruculide B. The terpene cyclase cdmG then produced the pentacyclic molecule 3-hydroxypentacecilide A, the backbone structure of chrodrimanin B, via folding the farnesyl moiety of the substrate into the chair-boat conformation. The short-chain dehydrogenase/reductase cdmF functions as the 3-OH dehydrogenase that oxidizes the C-3 hydroxyl group of 3-hydroxypentacecilide A and produces chrodrimanin C, the dehydrogenated product of 3-hydroxypentacecilide A. The cytochrome P450 monooxygenase cdmJ then accepts both 3-hydroxypentacecilide A and chrodrimanin C and functions as a C-7-beta-hydroxylase to produce respectively chrodrimanin H and chrodrimanin F. The dioxygenase cdmA accepts chrodrimanin H to afford chrodrimanin E, which is further transformed to chrodrimanin A by the dioxygenase cdmD. CdmA can also accept chrodrimanin C as substrate to convert it into verruculide A, which is further converted into chrodrimanin T by cdmD. The last step of the biosynthesis is proposed to be performed by the acetyltransferase cdmC which acetylates chrodrimanin A to yield chrodrimanin B. The pathway may also lead to the production of additional shunt products, including chrodrimanins T and U. The sequence is that of 6-hydroxymellein 5-farnesyltransferase cdmH from Talaromyces verruculosus (Penicillium verruculosum).